Here is a 664-residue protein sequence, read N- to C-terminus: Alcohol oxidase (664 aa).

Residue 8-39 (DIIVVGGGSTGCCIAGRLANLDDQNLTVALIE) participates in FAD binding. Histidine 568 (proton acceptor) is an active-site residue. Positions 662 to 664 (ARF) match the Microbody targeting signal motif.

It belongs to the GMC oxidoreductase family. Homooctamer. It depends on FAD as a cofactor.

The protein localises to the peroxisome matrix. It catalyses the reaction a primary alcohol + O2 = an aldehyde + H2O2. It functions in the pathway energy metabolism; methane degradation. Catalyzes the oxidation of methanol to formaldehyde and hydrogen peroxide, the first step in the methanol utilization pathway of methylotrophic yeasts. The polypeptide is Alcohol oxidase (MOX) (Pichia angusta (Yeast)).